Here is a 136-residue protein sequence, read N- to C-terminus: MPRTELILNAAVILYTMIPPDAHSLGSEGRVVNGNWRDTSDVKEGSLPREVTKQVNGSLSSRTKQVNEFSKHTRFLVDISFSCCSLINRSLWESAQKDELSDSFGKALTTKPECLAVRETPRNFRRNLCLVIPSLN.

It is found in the mitochondrion. This is an uncharacterized protein from Arabidopsis thaliana (Mouse-ear cress).